The chain runs to 138 residues: uncharacterized protein (138 aa).

This is an uncharacterized protein from Schizosaccharomyces pombe (strain 972 / ATCC 24843) (Fission yeast).